A 381-amino-acid chain; its full sequence is Gas vesicle protein C (381 aa).

7 repeat units span residues 22 to 59, 60 to 84, 85 to 122, 123 to 160, 161 to 192, 193 to 232, and 233 to 274. The interval 22-274 is 7 X approximate tandem repeats; sequence QAFAAYADEF…TETEVDIPPI (253 aa). The tract at residues 261 to 333 is disordered; sequence AVTGTETEVD…EDDQFLDDET (73 aa). Acidic residues predominate over residues 276-318; it reads DSVEPDGEDEDSKADDVEAEAEVETVEMEFGAEMDTEADEDVQ.

This sequence belongs to the halobacterial gas vesicle GvpC family. Post-translationally, detected as 2 slightly different sizes in vivo; the proteins appears larger in SDS-PAGE probably due to the acidic tail.

The protein localises to the gas vesicle. Its function is as follows. Confers stability, involved in shaping gas vesicles (GV), hollow, gas filled proteinaceous nanostructures found in some microorganisms. They allow positioning of halobacteria at the optimal depth for growth in the poorly aerated, shallow brine pools of their habitat. In terms of biological role, expression of a 9.5 kb mc-vac DNA fragment containing 2 divergently transcribed regions (gvpD-gvpE-gvpF-gvpG-gvpH-gvpI-gvpJ-gvpK-gvpL-gvpM and gvpA-gvpC-gvpN-gvpO) allows H.volcanii to produce gas vesicles. This is Gas vesicle protein C from Haloferax mediterranei (strain ATCC 33500 / DSM 1411 / JCM 8866 / NBRC 14739 / NCIMB 2177 / R-4) (Halobacterium mediterranei).